We begin with the raw amino-acid sequence, 246 residues long: uncharacterized protein (246 aa).

The next 4 helical transmembrane spans lie at 32-52 (TLFF…VGFI), 69-89 (IIAI…MCPF), 121-141 (IYFK…GVKI), and 146-166 (LAYL…MFFC). 2 4Fe-4S ferredoxin-type domains span residues 185 to 213 (FKLK…ITEK) and 210 to 239 (ITEK…FSAF). Cys194, Cys197, Cys200, Cys204, Cys219, Cys222, Cys225, and Cys229 together coordinate [4Fe-4S] cluster.

It localises to the cell membrane. This is an uncharacterized protein from Methanocaldococcus jannaschii (strain ATCC 43067 / DSM 2661 / JAL-1 / JCM 10045 / NBRC 100440) (Methanococcus jannaschii).